We begin with the raw amino-acid sequence, 508 residues long: Phosphoenolpyruvate carboxylase (508 aa).

It belongs to the PEPCase type 2 family. In terms of assembly, homotetramer. Requires Mg(2+) as cofactor.

The enzyme catalyses oxaloacetate + phosphate = phosphoenolpyruvate + hydrogencarbonate. Catalyzes the irreversible beta-carboxylation of phosphoenolpyruvate (PEP) to form oxaloacetate (OAA), a four-carbon dicarboxylic acid source for the tricarboxylic acid cycle. The polypeptide is Phosphoenolpyruvate carboxylase (Picrophilus torridus (strain ATCC 700027 / DSM 9790 / JCM 10055 / NBRC 100828 / KAW 2/3)).